The following is a 396-amino-acid chain: Deoxyuridine 5'-triphosphate nucleotidohydrolase (396 aa).

Substrate-binding positions include 280-282 (RSS) and 380-381 (FG).

It belongs to the dUTPase family. Mg(2+) serves as cofactor.

The catalysed reaction is dUTP + H2O = dUMP + diphosphate + H(+). Involved in nucleotide metabolism: produces dUMP, the immediate precursor of thymidine nucleotides and decreases the intracellular concentration of dUTP to avoid uracil incorporation into viral DNA. The protein is Deoxyuridine 5'-triphosphate nucleotidohydrolase of Homo sapiens (Human).